We begin with the raw amino-acid sequence, 253 residues long: Triosephosphate isomerase (253 aa).

A substrate-binding site is contributed by 8 to 10 (NWK). The active-site Electrophile is His93. Residue Glu165 is the Proton acceptor of the active site. Residues Gly171, Ser210, and 231 to 232 (GG) each bind substrate.

The protein belongs to the triosephosphate isomerase family. As to quaternary structure, homodimer.

It localises to the cytoplasm. It carries out the reaction D-glyceraldehyde 3-phosphate = dihydroxyacetone phosphate. Its pathway is carbohydrate biosynthesis; gluconeogenesis. The protein operates within carbohydrate degradation; glycolysis; D-glyceraldehyde 3-phosphate from glycerone phosphate: step 1/1. Its function is as follows. Involved in the gluconeogenesis. Catalyzes stereospecifically the conversion of dihydroxyacetone phosphate (DHAP) to D-glyceraldehyde-3-phosphate (G3P). This is Triosephosphate isomerase from Francisella tularensis subsp. novicida (strain U112).